Here is a 330-residue protein sequence, read N- to C-terminus: 4-hydroxythreonine-4-phosphate dehydrogenase (330 aa).

T133 contributes to the substrate binding site. 3 residues coordinate a divalent metal cation: H161, H206, and H261. 3 residues coordinate substrate: K269, N278, and R287.

It belongs to the PdxA family. In terms of assembly, homodimer. Zn(2+) serves as cofactor. Mg(2+) is required as a cofactor. The cofactor is Co(2+).

Its subcellular location is the cytoplasm. The enzyme catalyses 4-(phosphooxy)-L-threonine + NAD(+) = 3-amino-2-oxopropyl phosphate + CO2 + NADH. Its pathway is cofactor biosynthesis; pyridoxine 5'-phosphate biosynthesis; pyridoxine 5'-phosphate from D-erythrose 4-phosphate: step 4/5. Functionally, catalyzes the NAD(P)-dependent oxidation of 4-(phosphooxy)-L-threonine (HTP) into 2-amino-3-oxo-4-(phosphooxy)butyric acid which spontaneously decarboxylates to form 3-amino-2-oxopropyl phosphate (AHAP). The sequence is that of 4-hydroxythreonine-4-phosphate dehydrogenase from Xylella fastidiosa (strain 9a5c).